Consider the following 539-residue polypeptide: Glycerophosphoinositol inositolphosphodiesterase GDPD2 (539 aa).

The Cytoplasmic segment spans residues 1 to 38 (MAESPGCCSVWARCLHCLYSCHWRKCPRERMQTSKCDC). Residues 39–59 (IWFGLLFLTFLLSLSWLYIGL) form a helical membrane-spanning segment. The Extracellular portion of the chain corresponds to 60 to 85 (VLLNDLHNFNEFLFRRWGHWMDWSLA). Residues 86 to 106 (FLLVISLLVTYASLLLVLALL) traverse the membrane as a helical segment. Topologically, residues 107–121 (LRLCRQPLHLHSLHK) are cytoplasmic. The chain crosses the membrane as a helical span at residues 122–142 (VLLLLIMLLVAAGLVGLDIQW). Residues 143-154 (QQEWHSLRVSLQ) are Extracellular-facing. A helical membrane pass occupies residues 155–175 (ATAPFLHIGAAAGIALLAWPV). The Cytoplasmic portion of the chain corresponds to 176 to 188 (ADTFYRIHRRGPK). The helical transmembrane segment at 189–209 (ILLLLLFFGVVLVIYLAPLCI) threads the bilayer. Residues 210–490 (SSPCIMEPRD…PIWLITPQTY (281 aa)) lie on the Extracellular side of the membrane. Positions 224 to 479 (PGLVGHRGAP…NDCQLLQQMR (256 aa)) constitute a GP-PDE domain. A divalent metal cation contacts are provided by Glu-256, Asp-258, and His-271. The N-linked (GlcNAc...) asparagine glycan is linked to Asn-442. Residues 491–511 (LIIWVITNCVSTMLLLWTFLL) traverse the membrane as a helical segment. The Cytoplasmic portion of the chain corresponds to 512–539 (QRRFVKKRGKTGLETAVLLTRINNFMME).

It belongs to the glycerophosphoryl diester phosphodiesterase family. It depends on Ca(2+) as a cofactor.

The protein resides in the cell membrane. It localises to the cytoplasm. The protein localises to the cytoskeleton. The catalysed reaction is sn-glycero-3-phospho-1D-myo-inositol + H2O = 1D-myo-inositol 1-phosphate + glycerol + H(+). In terms of biological role, has glycerophosphoinositol inositolphosphodiesterase activity and specifically hydrolyzes glycerophosphoinositol, with no activity for other substrates such as glycerophosphoinositol 4-phosphate, glycerophosphocholine, glycerophosphoethanolamine, and glycerophosphoserine. Accelerates the program of osteoblast differentiation and growth. May play a role in remodeling of the actin cytoskeleton. The polypeptide is Glycerophosphoinositol inositolphosphodiesterase GDPD2 (GDPD2) (Homo sapiens (Human)).